We begin with the raw amino-acid sequence, 59 residues long: Large ribosomal subunit protein uL30 (59 aa).

This sequence belongs to the universal ribosomal protein uL30 family. As to quaternary structure, part of the 50S ribosomal subunit.

This is Large ribosomal subunit protein uL30 from Aliivibrio fischeri (strain MJ11) (Vibrio fischeri).